The chain runs to 392 residues: Succinate--CoA ligase [ADP-forming] subunit beta (392 aa).

The ATP-grasp domain maps to 9 to 247 (KAILRKYGVA…VTEEDPLEVE (239 aa)). Residues lysine 49, 56 to 58 (GRG), glutamate 102, leucine 105, and glutamate 110 each bind ATP. Residues asparagine 202 and aspartate 216 each contribute to the Mg(2+) site. Substrate contacts are provided by residues asparagine 267 and 324-326 (GIL).

This sequence belongs to the succinate/malate CoA ligase beta subunit family. As to quaternary structure, heterotetramer of two alpha and two beta subunits. Requires Mg(2+) as cofactor.

It catalyses the reaction succinate + ATP + CoA = succinyl-CoA + ADP + phosphate. The enzyme catalyses GTP + succinate + CoA = succinyl-CoA + GDP + phosphate. The protein operates within carbohydrate metabolism; tricarboxylic acid cycle; succinate from succinyl-CoA (ligase route): step 1/1. Functionally, succinyl-CoA synthetase functions in the citric acid cycle (TCA), coupling the hydrolysis of succinyl-CoA to the synthesis of either ATP or GTP and thus represents the only step of substrate-level phosphorylation in the TCA. The beta subunit provides nucleotide specificity of the enzyme and binds the substrate succinate, while the binding sites for coenzyme A and phosphate are found in the alpha subunit. The chain is Succinate--CoA ligase [ADP-forming] subunit beta from Koribacter versatilis (strain Ellin345).